The sequence spans 274 residues: 2-succinyl-6-hydroxy-2,4-cyclohexadiene-1-carboxylate synthase (274 aa).

The protein belongs to the AB hydrolase superfamily. MenH family. As to quaternary structure, monomer.

It catalyses the reaction 5-enolpyruvoyl-6-hydroxy-2-succinyl-cyclohex-3-ene-1-carboxylate = (1R,6R)-6-hydroxy-2-succinyl-cyclohexa-2,4-diene-1-carboxylate + pyruvate. It participates in quinol/quinone metabolism; 1,4-dihydroxy-2-naphthoate biosynthesis; 1,4-dihydroxy-2-naphthoate from chorismate: step 3/7. The protein operates within quinol/quinone metabolism; menaquinone biosynthesis. In terms of biological role, catalyzes a proton abstraction reaction that results in 2,5-elimination of pyruvate from 2-succinyl-5-enolpyruvyl-6-hydroxy-3-cyclohexene-1-carboxylate (SEPHCHC) and the formation of 2-succinyl-6-hydroxy-2,4-cyclohexadiene-1-carboxylate (SHCHC). This chain is 2-succinyl-6-hydroxy-2,4-cyclohexadiene-1-carboxylate synthase, found in Yersinia enterocolitica serotype O:8 / biotype 1B (strain NCTC 13174 / 8081).